We begin with the raw amino-acid sequence, 665 residues long: Envelope glycoprotein (665 aa).

A signal peptide spans 1–33 (MARSTLSKPLKNKVNPRGPLIPLILLMLRGVST). The interval 34–267 (ASPGSSPHQV…RYQNLGPRVP (234 aa)) is receptor-binding domain (RBD). At 34-610 (ASPGSSPHQV…FNRSPWFTTL (577 aa)) the chain is on the extracellular side. The N-linked (GlcNAc...) asparagine; by host glycan is linked to asparagine 45. Intrachain disulfides connect cysteine 79/cysteine 129, cysteine 105/cysteine 118, cysteine 106/cysteine 114, cysteine 152/cysteine 172, and cysteine 164/cysteine 177. Aspartate 117 is a binding site for Zn(2+). Residue asparagine 199 is glycosylated (N-linked (GlcNAc...) asparagine; by host). Cysteine 209 and cysteine 215 form a disulfide bridge. Positions 268–309 (IGPNPVLADQQPLSKPKPVKSPSVTKPPSGTPLSPTQLPPAG) are disordered. The span at 281–299 (SKPKPVKSPSVTKPPSGTP) shows a compositional bias: low complexity. N-linked (GlcNAc...) asparagine; by host glycosylation occurs at asparagine 326. 6 disulfides stabilise this stretch: cysteine 336–cysteine 339, cysteine 336–cysteine 563, cysteine 366–cysteine 420, cysteine 385–cysteine 397, cysteine 427–cysteine 440, and cysteine 555–cysteine 562. Residues 336-339 (CWLC) carry the CXXC motif. Residues asparagine 358 and asparagine 365 are each glycosylated (N-linked (GlcNAc...) asparagine; by host). Residues asparagine 398 and asparagine 434 are each glycosylated (N-linked (GlcNAc...) asparagine; by host). Residues 472 to 492 (VSLTLALLLGGLTMGGIAAGI) form a fusion peptide region. Positions 500–537 (MATQQFQQLQAAVQDDLREVEKSISNLEKSLTSLSEVV) form a coiled coil. The tract at residues 538–554 (LQNRRGLDLLFLKEGGL) is immunosuppression. Residues 555–563 (CAALKEECC) carry the CX6CC motif. A helical transmembrane segment spans residues 611-631 (ISTIMGPLIVLLMILLFGPCI). The S-palmitoyl cysteine; by host moiety is linked to residue cysteine 630. Residues 632 to 665 (LNRLVQFVKDRISVVQALVLTQQYHQLKPIEYEP) are Cytoplasmic-facing. The short motif at 655 to 658 (YHQL) is the YXXL motif; contains endocytosis signal element.

The mature envelope protein (Env) consists of a trimer of SU-TM heterodimers attached by a labile interchain disulfide bond. The activated Env consists of SU monomers and TM trimers. Specific enzymatic cleavages in vivo yield mature proteins. Envelope glycoproteins are synthesized as an inactive precursor that is N-glycosylated and processed likely by host cell furin or by a furin-like protease in the Golgi to yield the mature SU and TM proteins. The cleavage site between SU and TM requires the minimal sequence [KR]-X-[KR]-R. The R-peptide is released from the C-terminus of the cytoplasmic tail of the TM protein upon particle formation as a result of proteolytic cleavage by the viral protease. Cleavage of this peptide is required for TM to become fusogenic. Post-translationally, the CXXC motif is highly conserved across a broad range of retroviral envelope proteins. It is thought to participate in the formation of a labile disulfide bond possibly with the CX6CC motif present in the transmembrane protein. Isomerization of the intersubunit disulfide bond to an SU intrachain disulfide bond is thought to occur upon receptor recognition in order to allow membrane fusion. In terms of processing, the transmembrane protein is palmitoylated. The R-peptide is palmitoylated.

Its subcellular location is the virion membrane. It is found in the host cell membrane. The surface protein (SU) attaches the virus to the host cell by binding to its receptor. Interaction with HECT ubiquitin ligases activates a thiol in a CXXC motif of the C-terminal domain, where the other Cys residue participates in the formation of the intersubunit disulfide. The activated thiol will attack the disulfide and cause its isomerization into a disulfide isomer within the motif. This leads to SU displacement and TM refolding, and is thought to activate its fusogenic potential by unmasking its fusion peptide. Fusion occurs at the host cell plasma membrane. Functionally, the transmembrane protein (TM) acts as a class I viral fusion protein. Under the current model, the protein has at least 3 conformational states: pre-fusion native state, pre-hairpin intermediate state, and post-fusion hairpin state. During viral and target cell membrane fusion, the coiled coil regions (heptad repeats) assume a trimer-of-hairpins structure, positioning the fusion peptide in close proximity to the C-terminal region of the ectodomain. The formation of this structure appears to drive apposition and subsequent fusion of viral and target cell membranes. Membranes fusion leads to delivery of the nucleocapsid into the cytoplasm. In Mus musculus (Mouse), this protein is Envelope glycoprotein (env).